Here is a 284-residue protein sequence, read N- to C-terminus: Avenin-like b9 (284 aa).

An N-terminal signal peptide occupies residues 1–18 (MKVFILALLALAATTAIA).

Belongs to the prolamin family. Post-translationally, contains disulfide bonds.

Seed storage protein. Might be integrated via inter-chain disulfide bonds within the glutenin polymer. The sequence is that of Avenin-like b9 from Triticum aestivum (Wheat).